We begin with the raw amino-acid sequence, 469 residues long: ATP synthase subunit beta (469 aa).

156–163 (GGAGVGKT) is an ATP binding site.

Belongs to the ATPase alpha/beta chains family. In terms of assembly, F-type ATPases have 2 components, CF(1) - the catalytic core - and CF(0) - the membrane proton channel. CF(1) has five subunits: alpha(3), beta(3), gamma(1), delta(1), epsilon(1). CF(0) has three main subunits: a(1), b(2) and c(9-12). The alpha and beta chains form an alternating ring which encloses part of the gamma chain. CF(1) is attached to CF(0) by a central stalk formed by the gamma and epsilon chains, while a peripheral stalk is formed by the delta and b chains.

It is found in the cell membrane. The catalysed reaction is ATP + H2O + 4 H(+)(in) = ADP + phosphate + 5 H(+)(out). Its function is as follows. Produces ATP from ADP in the presence of a proton gradient across the membrane. The catalytic sites are hosted primarily by the beta subunits. The chain is ATP synthase subunit beta from Lactococcus lactis subsp. cremoris (strain MG1363).